A 283-amino-acid polypeptide reads, in one-letter code: ATP synthase gamma chain (283 aa).

Belongs to the ATPase gamma chain family. As to quaternary structure, F-type ATPases have 2 components, CF(1) - the catalytic core - and CF(0) - the membrane proton channel. CF(1) has five subunits: alpha(3), beta(3), gamma(1), delta(1), epsilon(1). CF(0) has three main subunits: a, b and c.

It is found in the cell membrane. Produces ATP from ADP in the presence of a proton gradient across the membrane. The gamma chain is believed to be important in regulating ATPase activity and the flow of protons through the CF(0) complex. In Clostridium beijerinckii (strain ATCC 51743 / NCIMB 8052) (Clostridium acetobutylicum), this protein is ATP synthase gamma chain.